We begin with the raw amino-acid sequence, 778 residues long: Dapper homolog 1 (778 aa).

Basic and acidic residues-rich tracts occupy residues 1–10 and 18–40; these read MKPDAAREPE and AEAE…TRER. Positions 1–40 are disordered; the sequence is MKPDAAREPEPLSPGRGAEAEGRWRERGEADTERQRTRER. The required for self-association stretch occupies residues 85-149; the sequence is DAAQRSRLEE…SEEHLETDSR (65 aa). The stretch at 85-149 forms a coiled coil; the sequence is DAAQRSRLEE…SEEHLETDSR (65 aa). The short motif at 125 to 134 is the Nuclear export signal element; sequence LDKQISDLRL. Disordered stretches follow at residues 305–324, 359–386, 397–416, 428–468, 544–616, and 694–721; these read KTHP…DPTK, GGIT…QLES, AGAA…KAAS, ESMK…SQKN, EKPR…HKRT, and NCFG…SEES. Positions 375–386 are enriched in basic and acidic residues; that stretch reads RSKDSKTDQLES. A compositionally biased stretch (polar residues) spans 432 to 443; it reads ESNQASAVSPKT. The short motif at 551 to 564 is the Bipartite nuclear localization signal element; that stretch reads KKCRFPDDSDTNKK. Positions 554–563 are enriched in basic and acidic residues; sequence RFPDDSDTNK. Residues 564-574 are compositionally biased toward basic residues; it reads KFRKTSAKGRR. A compositionally biased stretch (polar residues) spans 694–704; it reads NCFGDSESSVS. The PDZ-binding signature appears at 768-778; the sequence is RSGSLKLMTTV. S769 carries the post-translational modification Phosphoserine; by PKA.

The protein belongs to the dapper family. As to quaternary structure, can form homodimers and heterodimers with DACT2 or DACT3. Interacts with CSNK1D, PKA catalytic subunit, PKC-type kinase, CSNK2A1, CSNK2B, DVL1, DLV2, DVAL3, VANGL1, VANGL2, CTNND1 and HDAC1. Interacts with GSK3B; the interaction is indicative for an association of DACT1 with the beta-catenin destruction complex. Interacts with GSK3A. Interacts with YWHAB; the interaction is enhanced by PKA phosphorylating DACT1 at Ser-769. Interacts with CTNNB1. In terms of tissue distribution, expressed in multiple tissues including brain, heart, kidney, liver and testis.

It localises to the cytoplasm. The protein localises to the nucleus. It is found in the synapse. In terms of biological role, involved in regulation of intracellular signaling pathways during development. Specifically thought to play a role in canonical and/or non-canonical Wnt signaling pathways through interaction with DSH (Dishevelled) family proteins. The activation/inhibition of Wnt signaling may depend on the phosphorylation status. Proposed to regulate the degradation of CTNNB1/beta-catenin, thereby modulating the transcriptional activation of target genes of the Wnt signaling pathway. Its function in stabilizing CTNNB1 may involve inhibition of GSK3B activity. Promotes the membrane localization of CTNNB1. The cytoplasmic form can induce DVL2 degradation via a lysosome-dependent mechanism; the function is inhibited by PKA-induced binding to 14-3-3 proteins, such as YWHAB. Seems to be involved in morphogenesis at the primitive streak by regulating VANGL2 and DVL2; the function seems to be independent of canonical Wnt signaling and rather involves the non-canonical Wnt/planar cell polarity (PCP) pathway. The nuclear form may prevent the formation of LEF1:CTNNB1 complex and recruit HDAC1 to LEF1 at target gene promoters to repress transcription thus antagonizing Wnt signaling. May be involved in positive regulation of fat cell differentiation. During neuronal differentiation may be involved in excitatory synapse organization, and dendrite formation and establishment of spines. This chain is Dapper homolog 1 (Dact1), found in Mus musculus (Mouse).